The chain runs to 282 residues: Pantothenate synthetase (282 aa).

26–33 (MGNLHEGH) is an ATP binding site. Residue H33 is the Proton donor of the active site. A (R)-pantoate-binding site is contributed by Q57. Q57 serves as a coordination point for beta-alanine. 144–147 (GQKD) is a binding site for ATP. (R)-pantoate is bound at residue Q150. Residues L173 and 181–184 (LSSR) each bind ATP.

The protein belongs to the pantothenate synthetase family. In terms of assembly, homodimer.

The protein localises to the cytoplasm. The catalysed reaction is (R)-pantoate + beta-alanine + ATP = (R)-pantothenate + AMP + diphosphate + H(+). Its pathway is cofactor biosynthesis; (R)-pantothenate biosynthesis; (R)-pantothenate from (R)-pantoate and beta-alanine: step 1/1. Its function is as follows. Catalyzes the condensation of pantoate with beta-alanine in an ATP-dependent reaction via a pantoyl-adenylate intermediate. The chain is Pantothenate synthetase from Albidiferax ferrireducens (strain ATCC BAA-621 / DSM 15236 / T118) (Rhodoferax ferrireducens).